The chain runs to 341 residues: Biotin synthase (341 aa).

Residues 43 to 266 enclose the Radical SAM core domain; it reads SEIQLSQLLS…IAVARIVCPK (224 aa). Residues Cys-58, Cys-62, and Cys-65 each contribute to the [4Fe-4S] cluster site. Residues Cys-102, Cys-133, Cys-193, and Arg-270 each coordinate [2Fe-2S] cluster.

Belongs to the radical SAM superfamily. Biotin synthase family. Homodimer. [4Fe-4S] cluster is required as a cofactor. It depends on [2Fe-2S] cluster as a cofactor.

It carries out the reaction (4R,5S)-dethiobiotin + (sulfur carrier)-SH + 2 reduced [2Fe-2S]-[ferredoxin] + 2 S-adenosyl-L-methionine = (sulfur carrier)-H + biotin + 2 5'-deoxyadenosine + 2 L-methionine + 2 oxidized [2Fe-2S]-[ferredoxin]. Its pathway is cofactor biosynthesis; biotin biosynthesis; biotin from 7,8-diaminononanoate: step 2/2. In terms of biological role, catalyzes the conversion of dethiobiotin (DTB) to biotin by the insertion of a sulfur atom into dethiobiotin via a radical-based mechanism. The chain is Biotin synthase from Caulobacter vibrioides (strain ATCC 19089 / CIP 103742 / CB 15) (Caulobacter crescentus).